Reading from the N-terminus, the 195-residue chain is Probable GTP-binding protein EngB (195 aa).

An EngB-type G domain is found at 24–195; the sequence is DWPEIALAGR…EAWTAILKYL (172 aa). GTP-binding positions include 32 to 39, 59 to 63, 77 to 80, 144 to 147, and 176 to 178; these read GRSNVGKS, GKTQL, DVPG, TKAD, and FSS. 2 residues coordinate Mg(2+): Ser-39 and Thr-61.

It belongs to the TRAFAC class TrmE-Era-EngA-EngB-Septin-like GTPase superfamily. EngB GTPase family. The cofactor is Mg(2+).

In terms of biological role, necessary for normal cell division and for the maintenance of normal septation. This is Probable GTP-binding protein EngB from Lactococcus lactis subsp. cremoris (strain MG1363).